A 209-amino-acid polypeptide reads, in one-letter code: MDTNHPGSAGGRGGLGSIFGGGSPGYSHSDLAGVPLTGMSPLSPYLNVDPRYLVQDNDEFILPTGANKTRGRFELAFFTIGGCCMSGAAFGAVNGLRLGFKETQNMAWSKPKNVQILNMVTRQGALWANTLGSLALLYSAFGVIIEKTRGAEDDLNTIAAGTMTGMLYKSTGGLRGVARGGLAGLALTSAFALYNNWEHIKGSSSRLSL.

Helical transmembrane passes span 73–93 (FELA…FGAV), 125–145 (ALWA…GVII), and 180–200 (GGLA…WEHI).

This sequence belongs to the Tim17/Tim22/Tim23 family. Component of the TIM23 complex at least composed of timm23, timm17 and timm50. The complex interacts with the timm44 component of the PAM complex.

The protein resides in the mitochondrion inner membrane. Essential component of the TIM23 complex, a complex that mediates the translocation of transit peptide-containing proteins across the mitochondrial inner membrane. This is Mitochondrial import inner membrane translocase subunit Tim23 (timm23) from Xenopus tropicalis (Western clawed frog).